Reading from the N-terminus, the 476-residue chain is Glycogen synthase (476 aa).

K15 serves as a coordination point for ADP-alpha-D-glucose.

This sequence belongs to the glycosyltransferase 1 family. Bacterial/plant glycogen synthase subfamily.

The catalysed reaction is [(1-&gt;4)-alpha-D-glucosyl](n) + ADP-alpha-D-glucose = [(1-&gt;4)-alpha-D-glucosyl](n+1) + ADP + H(+). It functions in the pathway glycan biosynthesis; glycogen biosynthesis. Its function is as follows. Synthesizes alpha-1,4-glucan chains using ADP-glucose. This chain is Glycogen synthase, found in Streptococcus sanguinis (strain SK36).